The primary structure comprises 414 residues: Bystin (414 aa).

The segment covering 1–11 (MSAKRNTKLRH) has biased composition (basic residues). Residues 1 to 91 (MSAKRNTKLR…PSDDEGQADD (91 aa)) are disordered. Over residues 12–24 (APLEHAYVDDKSV) the composition is skewed to basic and acidic residues. The segment covering 25 to 34 (RRNKRSKQRG) has biased composition (basic residues).

Belongs to the bystin family.

The protein localises to the nucleus. Its subcellular location is the nucleolus. In terms of biological role, required for processing of 20S pre-rRNA precursor and biogenesis of 40S ribosomal subunits. This Monosiga brevicollis (Choanoflagellate) protein is Bystin (bysl).